A 205-amino-acid chain; its full sequence is MKRTRTSKAWMREHINDTYVQLARKEGWRSRAAFKLMEMDDKDKLLKHGEVVVDLGATPGGWSQVAVKRVGDGGLVFALDLLEMEPIHGVHFIQGDFREDEVLQQLEEQLGERRVGLVMSDMAPNMSGVPLVDQARIMHLAELGLEFSRVHLKPEGAFLVKVFQGTDYETFLKQMRETFKTVAVRKPDASRDRSPELYLLGRTLR.

Residues Gly-60, Trp-62, Asp-80, Asp-96, and Asp-121 each coordinate S-adenosyl-L-methionine. Residue Lys-161 is the Proton acceptor of the active site.

Belongs to the class I-like SAM-binding methyltransferase superfamily. RNA methyltransferase RlmE family.

It localises to the cytoplasm. The enzyme catalyses uridine(2552) in 23S rRNA + S-adenosyl-L-methionine = 2'-O-methyluridine(2552) in 23S rRNA + S-adenosyl-L-homocysteine + H(+). Functionally, specifically methylates the uridine in position 2552 of 23S rRNA at the 2'-O position of the ribose in the fully assembled 50S ribosomal subunit. The protein is Ribosomal RNA large subunit methyltransferase E of Dechloromonas aromatica (strain RCB).